We begin with the raw amino-acid sequence, 231 residues long: Putative aminodeoxychorismate lyase (231 aa).

It belongs to the class-IV pyridoxal-phosphate-dependent aminotransferase family. Pyridoxal 5'-phosphate serves as cofactor.

It localises to the cytoplasm. The protein resides in the nucleus. The catalysed reaction is 4-amino-4-deoxychorismate = 4-aminobenzoate + pyruvate + H(+). Its pathway is cofactor biosynthesis; tetrahydrofolate biosynthesis; 4-aminobenzoate from chorismate: step 2/2. In terms of biological role, converts 4-amino-4-deoxychorismate into 4-aminobenzoate (PABA) and pyruvate. This is Putative aminodeoxychorismate lyase from Schizosaccharomyces pombe (strain 972 / ATCC 24843) (Fission yeast).